Consider the following 222-residue polypeptide: Probable transaldolase 2 (222 aa).

Lys-90 acts as the Schiff-base intermediate with substrate in catalysis.

Belongs to the transaldolase family. Type 3B subfamily.

Its subcellular location is the cytoplasm. It carries out the reaction D-sedoheptulose 7-phosphate + D-glyceraldehyde 3-phosphate = D-erythrose 4-phosphate + beta-D-fructose 6-phosphate. It functions in the pathway carbohydrate degradation; pentose phosphate pathway; D-glyceraldehyde 3-phosphate and beta-D-fructose 6-phosphate from D-ribose 5-phosphate and D-xylulose 5-phosphate (non-oxidative stage): step 2/3. In terms of biological role, transaldolase is important for the balance of metabolites in the pentose-phosphate pathway. The chain is Probable transaldolase 2 from Bacillus anthracis.